The sequence spans 259 residues: E3 ubiquitin-protein ligase RNF170 (259 aa).

Over 1-25 the chain is Lumenal; the sequence is MAKYQGEVQSLKLDDDSVIEGVSDQ. Residues 26–46 form a helical membrane-spanning segment; that stretch reads VLVAVVVSLALIATLVYALFS. Topologically, residues 47–202 are cytoplasmic; sequence RNAHQNIHPE…GGLFWMFRIR (156 aa). The RING-type zinc-finger motif lies at 88–131; that stretch reads CPICLHQASLPVETNCGHLFCGTCIVAYWRYGSWLGAISCPICR. Residues 203–223 form a helical membrane-spanning segment; it reads IILCLMGAFFYLISPLDFVPE. Residue Ala-224 is a topological domain, lumenal. The chain crosses the membrane as a helical span at residues 225 to 245; the sequence is LFGILGFLDDFFVIFLLLIYI. Topologically, residues 246–259 are cytoplasmic; the sequence is SIMYREVITQRLNR.

In terms of assembly, constitutively associated with the ERLIN1/ERLIN 2 complex. Interacts with activated ITPR1.

Its subcellular location is the endoplasmic reticulum membrane. It carries out the reaction S-ubiquitinyl-[E2 ubiquitin-conjugating enzyme]-L-cysteine + [acceptor protein]-L-lysine = [E2 ubiquitin-conjugating enzyme]-L-cysteine + N(6)-ubiquitinyl-[acceptor protein]-L-lysine.. The protein operates within protein modification; protein ubiquitination. Its function is as follows. E3 ubiquitin-protein ligase. Plays an essential role in stimulus-induced inositol 1,4,5-trisphosphate receptor type 1 (ITPR1) ubiquitination and degradation via the endoplasmic reticulum-associated degradation (ERAD) pathway. Also involved in ITPR1 turnover in resting cells. Selectively inhibits the TLR3-triggered innate immune response by promoting the 'Lys-48'-linked polyubiquitination and degradation of TLR3. The chain is E3 ubiquitin-protein ligase RNF170 (RNF170) from Bos taurus (Bovine).